The sequence spans 335 residues: RVS161-like protein RVS162 (335 aa).

The BAR domain maps to 17-310; that stretch reads VMLKTGHIEQ…LDAQTRQDYI (294 aa). A coiled-coil region spans residues 30 to 56; the sequence is KEYEFQEKRYRTMEENSIKLQKNLRLY. Residues 105 to 127 are disordered; it reads HEEEGEEKEEEENDNTTTTTTTT. The span at 107-118 shows a compositional bias: acidic residues; that stretch reads EEGEEKEEEEND. A coiled-coil region spans residues 222–259; it reads TNIIELNHNQYEEKLKIYNQELTEVESKYVEINNQLLI.

It localises to the cytoplasm. The protein resides in the cytoskeleton. Functionally, component of a cytoskeletal structure that is required for membrane curvature. The polypeptide is RVS161-like protein RVS162 (Candida albicans (strain SC5314 / ATCC MYA-2876) (Yeast)).